The chain runs to 60 residues: Large ribosomal subunit protein bL33 (60 aa).

Belongs to the bacterial ribosomal protein bL33 family.

This chain is Large ribosomal subunit protein bL33, found in Flavobacterium johnsoniae (strain ATCC 17061 / DSM 2064 / JCM 8514 / BCRC 14874 / CCUG 350202 / NBRC 14942 / NCIMB 11054 / UW101) (Cytophaga johnsonae).